Consider the following 474-residue polypeptide: Pleckstrin homology domain-containing family S member 1 (474 aa).

A PH domain is found at 20–135 (EVHKRDYFIK…WVSFMTPYCQ (116 aa)). 3 disordered regions span residues 232-251 (IAGPNDSGDSIESNSPDQGF), 272-321 (STSA…DDQK), and 449-474 (RDLPELERTPKRSPAIKKSQKEAAGE). Over residues 238–248 (SGDSIESNSPD) the composition is skewed to polar residues. Residues 449-458 (RDLPELERTP) are compositionally biased toward basic and acidic residues.

This is Pleckstrin homology domain-containing family S member 1 from Mus musculus (Mouse).